The following is an 824-amino-acid chain: MSDTDGKKTLGLRGGAPRPGNVKQSFSHGRTKNVVVETKRKRVVVPKAGATTSAGGKAPIGDPSRRPAGISDAEMERRLKAVKAAKAREAEEEAARIAEEKARAEERERRRAEQEERERAEREREESLKAKAEEDKRRKDEAEAAAKAAAAPAAEPVVQRPAAKAAPEPAPRKQQDRDRDNKRGGKGNDDSRRSGKLTLNQALAGGEGGRQRSMAAMKRKQERARQKAMGGQVEREKVVRDVQVPEAIVVSELANRMSEKVGEVVKALMNNGMMVTQNQAIDADTAELIVQEFGHRIVRVSDADVEDVIKEVEDDEADLKTRPPVVTIMGHVDHGKTSLLDAIRKAKVVAGEAGGITQHIGAYQVKTDSGQLLSFLDTPGHAAFTSMRSRGAQVTDIVVLVVAADDAVMPQTIEAINHAKAAEVPMIVAINKIDRPAADPTKVRTDLLQHEVIVEQMSGDVQDVEVSAITGQGLDDLLEAIALQAEILELKANPNRAAQGAVIEAQLDVGRGPVATVLVQNGTLRQGDIFVVGEQYGKVRALINDQGERVKEAGPSVPVEVLGLNGTPEAGDVLNVTSTEAQAREIASYRANAAKDKRAAAGAATTLEQLMANAKADEDVSELPILVKADVQGSAEAIVQAMEKIGNDEVRVRVLHSGVGAITETDVGLAEASGAPIMGFNVRANASARNTANQKGVELRYYSIIYDLVDDVKAAASGLLSAEIRENFIGYATIKEVFKVTGVGKVAGCLVTEGVARRSAGVRLLRDNVVIHEGTLKTLKRFKDEVAEVQSGQECGMAFENYDDIRADDVIEIFEREEITRTLT.

2 disordered regions span residues 1-32 (MSDT…GRTK) and 45-232 (VPKA…MGGQ). Residues 45–57 (VPKAGATTSAGGK) show a composition bias toward low complexity. The span at 86–144 (KAREAEEEAARIAEEKARAEERERRRAEQEERERAEREREESLKAKAEEDKRRKDEAEA) shows a compositional bias: basic and acidic residues. Residues 145–167 (AAKAAAAPAAEPVVQRPAAKAAP) are compositionally biased toward low complexity. Positions 170-193 (APRKQQDRDRDNKRGGKGNDDSRR) are enriched in basic and acidic residues. Positions 321–489 (TRPPVVTIMG…AIALQAEILE (169 aa)) constitute a tr-type G domain. The G1 stretch occupies residues 330–337 (GHVDHGKT). GTP is bound at residue 330 to 337 (GHVDHGKT). The segment at 355-359 (GITQH) is G2. The tract at residues 377–380 (DTPG) is G3. Residues 377–381 (DTPGH) and 431–434 (NKID) contribute to the GTP site. Positions 431–434 (NKID) are G4. A G5 region spans residues 467–469 (SAI).

The protein belongs to the TRAFAC class translation factor GTPase superfamily. Classic translation factor GTPase family. IF-2 subfamily.

The protein localises to the cytoplasm. One of the essential components for the initiation of protein synthesis. Protects formylmethionyl-tRNA from spontaneous hydrolysis and promotes its binding to the 30S ribosomal subunits. Also involved in the hydrolysis of GTP during the formation of the 70S ribosomal complex. The sequence is that of Translation initiation factor IF-2 from Roseobacter denitrificans (strain ATCC 33942 / OCh 114) (Erythrobacter sp. (strain OCh 114)).